The primary structure comprises 327 residues: Protein CONSERVED IN THE GREEN LINEAGE AND DIATOMS 27, chloroplastic (327 aa).

A chloroplast-targeting transit peptide spans 1-59 (MLRLIVNYPLIPKISHRVCSNSSSKLGSYYDSSSIIKYGGISDVVGKKQELFLSVSVKA). The disordered stretch occupies residues 66 to 88 (NGGGSMSFSGQSWDPSSEIEVPS). Helical transmembrane passes span 119–139 (LGGL…AASF), 148–168 (FILA…LRIY), and 225–245 (LIGT…ATPV).

As to expression, mostly expressed in seeds, leaves and flowers, and, to a lower extent, in roots.

Its subcellular location is the membrane. The protein resides in the plastid. It localises to the chloroplast. In terms of biological role, required for growth in low iron conditions. The protein is Protein CONSERVED IN THE GREEN LINEAGE AND DIATOMS 27, chloroplastic of Arabidopsis thaliana (Mouse-ear cress).